We begin with the raw amino-acid sequence, 692 residues long: Elongation factor G (692 aa).

Positions 8–282 (KDYRNIGIMA…AVVDYLPSPL (275 aa)) constitute a tr-type G domain. Residues 17–24 (AHIDAGKT), 81–85 (DTPGH), and 135–138 (NKMD) contribute to the GTP site.

Belongs to the TRAFAC class translation factor GTPase superfamily. Classic translation factor GTPase family. EF-G/EF-2 subfamily.

The protein resides in the cytoplasm. Functionally, catalyzes the GTP-dependent ribosomal translocation step during translation elongation. During this step, the ribosome changes from the pre-translocational (PRE) to the post-translocational (POST) state as the newly formed A-site-bound peptidyl-tRNA and P-site-bound deacylated tRNA move to the P and E sites, respectively. Catalyzes the coordinated movement of the two tRNA molecules, the mRNA and conformational changes in the ribosome. This is Elongation factor G (fusA) from Mycoplasmopsis pulmonis (strain UAB CTIP) (Mycoplasma pulmonis).